Here is a 407-residue protein sequence, read N- to C-terminus: Probable tRNA sulfurtransferase (407 aa).

The region spanning 61 to 165 (NEITYRLSKI…LDAIYMYEEV (105 aa)) is the THUMP domain. ATP-binding positions include 183 to 184 (ML), 208 to 209 (HF), R265, G287, and Q296.

This sequence belongs to the ThiI family.

It localises to the cytoplasm. The enzyme catalyses [ThiI sulfur-carrier protein]-S-sulfanyl-L-cysteine + a uridine in tRNA + 2 reduced [2Fe-2S]-[ferredoxin] + ATP + H(+) = [ThiI sulfur-carrier protein]-L-cysteine + a 4-thiouridine in tRNA + 2 oxidized [2Fe-2S]-[ferredoxin] + AMP + diphosphate. The catalysed reaction is [ThiS sulfur-carrier protein]-C-terminal Gly-Gly-AMP + S-sulfanyl-L-cysteinyl-[cysteine desulfurase] + AH2 = [ThiS sulfur-carrier protein]-C-terminal-Gly-aminoethanethioate + L-cysteinyl-[cysteine desulfurase] + A + AMP + 2 H(+). The protein operates within cofactor biosynthesis; thiamine diphosphate biosynthesis. In terms of biological role, catalyzes the ATP-dependent transfer of a sulfur to tRNA to produce 4-thiouridine in position 8 of tRNAs, which functions as a near-UV photosensor. Also catalyzes the transfer of sulfur to the sulfur carrier protein ThiS, forming ThiS-thiocarboxylate. This is a step in the synthesis of thiazole, in the thiamine biosynthesis pathway. The sulfur is donated as persulfide by IscS. This chain is Probable tRNA sulfurtransferase, found in Staphylococcus aureus (strain Mu3 / ATCC 700698).